The following is a 558-amino-acid chain: Solute carrier family 22 member 6-A (558 aa).

Residues 1-15 are Cytoplasmic-facing; that stretch reads MSFAELLERTGGMGR. Residues 16–36 traverse the membrane as a helical segment; the sequence is FQITQVALMCFPILLMASHNL. The Extracellular portion of the chain corresponds to 37–140; the sequence is LQNFSAAIPD…LVCGHKNRRQ (104 aa). Residues 141–161 traverse the membrane as a helical segment; the sequence is LAQSVYMGGVLVGAIILGGLS. Residues 162 to 167 lie on the Cytoplasmic side of the membrane; that stretch reads DRYGRR. Residues 168 to 188 form a helical membrane-spanning segment; the sequence is ALLIWSYFQMAVSGLCSAFSP. Over 189 to 197 the chain is Extracellular; the sequence is NYLSYCIFR. Residues 198–218 form a helical membrane-spanning segment; the sequence is FLTGMALSGIGLNTTALIVEW. At 219 to 225 the chain is on the cytoplasmic side; it reads VPTRVRT. The helical transmembrane segment at 226–246 threads the bilayer; it reads ITGTLAGFSYTVGQLLLAGLA. Residues 247-253 are Extracellular-facing; it reads YAMRDWR. Residues 254–274 form a helical membrane-spanning segment; the sequence is WLQLCVSLPFFIFFLYSWWFP. Over 275-342 the chain is Cytoplasmic; the sequence is ESARWLVLSG…DLIRTSTIRR (68 aa). The helical transmembrane segment at 343-363 threads the bilayer; it reads ISCALSLVWFSTSFAYYGLAM. Residues 364–369 lie on the Extracellular side of the membrane; it reads DLQNFN. The chain crosses the membrane as a helical span at residues 370 to 390; the sequence is VSIYLIQVIFGAVDFPAKIFS. The Cytoplasmic segment spans residues 391 to 400; that stretch reads TTAMIYVGRK. A helical membrane pass occupies residues 401-421; that stretch reads FTQLMSLILGGVVILANSFVP. Residues 422-428 lie on the Extracellular side of the membrane; that stretch reads HEMQTVR. The chain crosses the membrane as a helical span at residues 429 to 449; that stretch reads TGMAVFGKGCLAASFSCVFLY. At 450-462 the chain is on the cytoplasmic side; that stretch reads TTELYPTVIRQSG. A helical transmembrane segment spans residues 463-483; the sequence is LGLCSTMARIGGIVAPLVKIL. The Extracellular portion of the chain corresponds to 484–488; it reads GEYYP. A helical membrane pass occupies residues 489–509; it reads FLPLVIYGGAPIISGLCVFFL. Topologically, residues 510–558 are cytoplasmic; the sequence is PETVNKPLPDTIEEVEKRIKAPKKENEMNEIVSLKKKEGMKENPVNDVL. Over residues 539–550 the composition is skewed to basic and acidic residues; that stretch reads EIVSLKKKEGMK. The disordered stretch occupies residues 539–558; the sequence is EIVSLKKKEGMKENPVNDVL.

Belongs to the major facilitator (TC 2.A.1) superfamily. Organic cation transporter (TC 2.A.1.19) family. Glycosylated. Glycosylation is necessary for proper targeting of the transporter to the plasma membrane.

The protein localises to the cell membrane. Its subcellular location is the basolateral cell membrane. The protein resides in the basal cell membrane. Its function is as follows. Involved in the renal elimination of endogenous and exogenous organic anions. Mediates the sodium-independent uptake of p-aminohippurate (PAH), 2,3-dimercapto-1-propanesulfonic acid (DMPS), cidofovir, adefovir, 9-(2-phosphonylmethoxyethyl) guanine (PMEG), 9-(2-phosphonylmethoxyethyl) diaminopurine (PMEDAP), ochratoxin (OTA), acyclovir (ACV), 3'-azido-3-'deoxythymidine (AZT), cimetidine (CMD), 2,4-dichloro-phenoxyacetate (2,4-D), hippurate (HA), indoleacetate (IA), indoxyl sulfate (IS) and 3-carboxy-4-methyl-5-propyl-2-furanpropionate (CMPF) and edaravone sulfate. PAH uptake is inhibited by p-chloromercuribenzenesulphonate (PCMBS), diethyl pyrocarbonate (DEPC), indomethacin, sulindac, diclofenac, carprofen, okadaic acid, benzothiazolylcysteine (BTC), S-chlorotrifluoroethylcysteine (CTFC), cysteine S-conjugates S-dichlorovinylcysteine (DCVC), furosemide, steviol, phorbol 12-myristate 13-acetate (PMA), calcium ionophore A23187, benzylpenicillin, bumetamide, losartan, probenecid, phenol red, urate, glutarate and alpha-ketoglutarate. This is Solute carrier family 22 member 6-A (slc22a6-a) from Xenopus laevis (African clawed frog).